Consider the following 459-residue polypeptide: ATP synthase subunit beta (459 aa).

148–155 is an ATP binding site; the sequence is GGAGVGKT.

It belongs to the ATPase alpha/beta chains family. As to quaternary structure, F-type ATPases have 2 components, CF(1) - the catalytic core - and CF(0) - the membrane proton channel. CF(1) has five subunits: alpha(3), beta(3), gamma(1), delta(1), epsilon(1). CF(0) has three main subunits: a(1), b(2) and c(9-12). The alpha and beta chains form an alternating ring which encloses part of the gamma chain. CF(1) is attached to CF(0) by a central stalk formed by the gamma and epsilon chains, while a peripheral stalk is formed by the delta and b chains.

Its subcellular location is the cell inner membrane. It carries out the reaction ATP + H2O + 4 H(+)(in) = ADP + phosphate + 5 H(+)(out). Functionally, produces ATP from ADP in the presence of a proton gradient across the membrane. The catalytic sites are hosted primarily by the beta subunits. In Thioalkalivibrio sulfidiphilus (strain HL-EbGR7), this protein is ATP synthase subunit beta.